The following is a 502-amino-acid chain: Beta-amyrin 28-monooxygenase CYP716A379 (502 aa).

The helical; Signal-anchor for type II membrane protein transmembrane segment at 3-23 threads the bilayer; the sequence is LITLLSALLVLAIVSLSTFFV. 2 N-linked (GlcNAc...) asparagine glycosylation sites follow: Asn88 and Asn181. Residue Cys444 coordinates heme.

Belongs to the cytochrome P450 family. Heme is required as a cofactor. In terms of tissue distribution, mainly expressed in flowers and flower buds, to a lesser extent in young leaves and, at low levels, in old leaves, stems and roots.

Its subcellular location is the membrane. The enzyme catalyses beta-amyrin + 3 reduced [NADPH--hemoprotein reductase] + 3 O2 = oleanolate + 3 oxidized [NADPH--hemoprotein reductase] + 4 H2O + 4 H(+). Its pathway is secondary metabolite biosynthesis; terpenoid biosynthesis. Its function is as follows. Component of the oleanane-type triterpene saponins (e.g. saponarioside A and saponarioside B) biosynthetic pathway, leading to the production of natural products with detergent properties used as traditional sources of soap. An oxidoreductase that facilitates the oxidation of the methyl group to a carboxyl group at the C-28 position of beta-amyrin, resulting in the formation of oleanolic acid. Catalyzes also the subsequent oxidation of the methyl group to a&lt; carboxyl group at the C-16 alpha position of oleanolic acid, resulting in the formation of echinocystic acid. This chain is Beta-amyrin 28-monooxygenase CYP716A379, found in Saponaria officinalis (Common soapwort).